The chain runs to 335 residues: Transmembrane protein 120B-A (335 aa).

Residues 1-40 adopt a coiled-coil conformation; that stretch reads MSLQKCQEEWSEIEKEFQQLQETHKVYKQKLEELNSLQNL. The next 6 helical transmembrane spans lie at 100-122, 130-150, 157-177, 193-213, 268-288, and 300-320; these read GLYLNLVLGNVNVTLLSTQAKFA, FKLYLTIILLLGAITCRFVLN, VFNFLLVWYYCTLTIRESILI, VSTFLSGVMLTWPDGLMYQIF, FLLPFLFFGHFWQLYNAITLF, and QVFVLALTFLLLFLGNFLTTL.

This sequence belongs to the TMEM120 family.

It is found in the nucleus inner membrane. In terms of biological role, necessary for efficient adipogenesis. Does not show ion channel activity. The sequence is that of Transmembrane protein 120B-A (tmem120b-a) from Xenopus laevis (African clawed frog).